The chain runs to 429 residues: Serine hydroxymethyltransferase (429 aa).

(6S)-5,6,7,8-tetrahydrofolate is bound by residues Leu133 and 137–139 (GHL). Lys243 is modified (N6-(pyridoxal phosphate)lysine). Glu259 is a (6S)-5,6,7,8-tetrahydrofolate binding site.

It belongs to the SHMT family. Homodimer. It depends on pyridoxal 5'-phosphate as a cofactor.

It localises to the cytoplasm. It catalyses the reaction (6R)-5,10-methylene-5,6,7,8-tetrahydrofolate + glycine + H2O = (6S)-5,6,7,8-tetrahydrofolate + L-serine. The protein operates within one-carbon metabolism; tetrahydrofolate interconversion. It participates in amino-acid biosynthesis; glycine biosynthesis; glycine from L-serine: step 1/1. In terms of biological role, catalyzes the reversible interconversion of serine and glycine with tetrahydrofolate (THF) serving as the one-carbon carrier. This reaction serves as the major source of one-carbon groups required for the biosynthesis of purines, thymidylate, methionine, and other important biomolecules. Also exhibits THF-independent aldolase activity toward beta-hydroxyamino acids, producing glycine and aldehydes, via a retro-aldol mechanism. In Aster yellows witches'-broom phytoplasma (strain AYWB), this protein is Serine hydroxymethyltransferase.